Here is a 103-residue protein sequence, read N- to C-terminus: DNA-directed RNA polymerase subunit omega (103 aa).

Positions 52–103 (EIESGNVTIHPDPEGKREAVRRRIEEEKRRKEEEEKKIKEQIAKEKEDGEKI) are disordered. Residues 62-103 (PDPEGKREAVRRRIEEEKRRKEEEEKKIKEQIAKEKEDGEKI) show a composition bias toward basic and acidic residues.

It belongs to the RNA polymerase subunit omega family. In terms of assembly, the RNAP catalytic core consists of 2 alpha, 1 beta, 1 beta' and 1 omega subunit. When a sigma factor is associated with the core the holoenzyme is formed, which can initiate transcription.

It carries out the reaction RNA(n) + a ribonucleoside 5'-triphosphate = RNA(n+1) + diphosphate. In terms of biological role, promotes RNA polymerase assembly. Latches the N- and C-terminal regions of the beta' subunit thereby facilitating its interaction with the beta and alpha subunits. The polypeptide is DNA-directed RNA polymerase subunit omega (Streptococcus pneumoniae serotype 19F (strain G54)).